We begin with the raw amino-acid sequence, 223 residues long: Voltage-dependent calcium channel gamma-1 subunit (223 aa).

Topologically, residues 1 to 10 are cytoplasmic; sequence MSQTKTAKVR. A helical membrane pass occupies residues 11–29; that stretch reads VTLFFILAGGVLAMVAVVT. Over 30-109 the chain is Extracellular; it reads DHWAVLSPHL…TQKEYSISAA (80 aa). 2 N-linked (GlcNAc...) asparagine glycosylation sites follow: Asn43 and Asn80. An intrachain disulfide couples Cys57 to Cys81. The chain crosses the membrane as a helical span at residues 110–130; the sequence is AIAIFSLGFIIIGSICAFLSF. Over 131–135 the chain is Cytoplasmic; that stretch reads GNKRD. Residues 136 to 156 form a helical membrane-spanning segment; that stretch reads YLLRPASMFYAFAGLCLIVSV. Topologically, residues 157 to 180 are extracellular; it reads EVMRQSVKRMIDSEDTVWIEYYYS. The chain crosses the membrane as a helical span at residues 181–205; it reads WSFACACAGFTLLFLGGLFLLLFSL. Residues 206-223 lie on the Cytoplasmic side of the membrane; sequence PRMPQNPWESCMDTESEH.

Belongs to the PMP-22/EMP/MP20 family. CACNG subfamily. Component of a calcium channel complex consisting of a pore-forming alpha subunit (CACNA1S) and the ancillary subunits CACNB1 or CACNB2, CACNG1 and CACNA2D1. The channel complex contains alpha, beta, gamma and delta subunits in a 1:1:1:1 ratio, i.e. it contains either CACNB1 or CACNB2. Post-translationally, N-glycosylated. As to expression, skeletal muscle.

It localises to the cell membrane. It is found in the sarcolemma. Regulatory subunit of the voltage-gated calcium channel that gives rise to L-type calcium currents in skeletal muscle. Regulates channel inactivation kinetics. The polypeptide is Voltage-dependent calcium channel gamma-1 subunit (Cacng1) (Rattus norvegicus (Rat)).